The chain runs to 224 residues: Protein YiiM (224 aa).

Residues 26-163 (IQVDGELMLT…VSADAPLELV (138 aa)) form the MOSC domain.

In terms of assembly, monomer.

The protein is Protein YiiM (yiiM) of Escherichia coli (strain K12).